Consider the following 378-residue polypeptide: Protein arginine N-methyltransferase 6 (378 aa).

Residues 1 to 46 are disordered; sequence MSLSKKRKLESGDSGGAGAGGEGAEEENGGEQEAAPPRPRRTKSER. Over residues 13 to 22 the composition is skewed to gly residues; sequence DSGGAGAGGE. The residue at position 38 (arginine 38) is an Asymmetric dimethylarginine; by autocatalysis. The region spanning 47–377 is the SAM-dependent MTase PRMT-type domain; it reads DQLYYECYSD…EEKTKDFAME (331 aa). S-adenosyl-L-methionine-binding residues include histidine 60, arginine 69, glycine 93, glutamate 115, and glutamate 144. Active-site residues include glutamate 158 and glutamate 167.

This sequence belongs to the class I-like SAM-binding methyltransferase superfamily. Protein arginine N-methyltransferase family. PRMT6 subfamily. Interacts with (and methylates) HIV-1 Tat, Rev and Nucleocapsid protein p7 (NC). Interacts with EPB41L3 and NCOA1. In terms of processing, automethylation enhances its stability.

It localises to the nucleus. The catalysed reaction is L-arginyl-[protein] + 2 S-adenosyl-L-methionine = N(omega),N(omega)-dimethyl-L-arginyl-[protein] + 2 S-adenosyl-L-homocysteine + 2 H(+). In terms of biological role, arginine methyltransferase that can catalyze the formation of both omega-N monomethylarginine (MMA) and asymmetrical dimethylarginine (aDMA), with a strong preference for the formation of aDMA. Preferentially methylates arginyl residues present in a glycine and arginine-rich domain and displays preference for monomethylated substrates. Specifically mediates the asymmetric dimethylation of histone H3 'Arg-2' to form H3R2me2a. H3R2me2a represents a specific tag for epigenetic transcriptional repression and is mutually exclusive with methylation on histone H3 'Lys-4' (H3K4me2 and H3K4me3). Acts as a transcriptional repressor of various genes such as HOXA2, THBS1 and TP53. Repression of TP53 blocks cellular senescence. Also methylates histone H2A and H4 'Arg-3' (H2AR3me and H4R3me, respectively). Acts as a regulator of DNA base excision during DNA repair by mediating the methylation of DNA polymerase beta (POLB), leading to the stimulation of its polymerase activity by enhancing DNA binding and processivity. Methylates HMGA1. Regulates alternative splicing events. Acts as a transcriptional coactivator of a number of steroid hormone receptors including ESR1, ESR2, PGR and NR3C1. Promotes fasting-induced transcriptional activation of the gluconeogenic program through methylation of the CRTC2 transcription coactivator. Methylates GPS2, protecting GPS2 from ubiquitination and degradation. Methylates SIRT7, inhibiting SIRT7 histone deacetylase activity and promoting mitochondria biogenesis. This is Protein arginine N-methyltransferase 6 (Prmt6) from Mus musculus (Mouse).